The sequence spans 64 residues: Alpha-conotoxin GI (64 aa).

A signal peptide spans M1–S21. The propeptide occupies F22 to K49. Cystine bridges form between C51–C56 and C52–C62. Position 62 is a cysteine amide (C62).

Belongs to the conotoxin A superfamily. Not hydroxylated; hydroxylation, on a synthetic hydroxylated GI, improves its folding but impairs its activity against target receptors. As to expression, expressed by the venom duct.

The protein resides in the secreted. Functionally, alpha-conotoxins act on postsynaptic membranes, they bind to the nicotinic acetylcholine receptors (nAChR) and thus inhibit them. Reversibly inhibits mammalian muscle nAChR (IC(50)=339 nM on adult subtype (alpha-1-beta-1-gamma-delta/CHRNA1-CHRNB1-CHRNG-CHRND) and IC(50)=5.86-995 nM on fetal subtype (alpha-1-beta-1-delta-epsilon/CHRNA1-CHRNB1-CHRND-CHRNE)). The higher affinity site is the alpha/delta site on mouse muscle-derived BC3H-1 receptor, and the other site (alpha/gamma site) on nicotinic receptors from Torpedo californica electric organ. This chain is Alpha-conotoxin GI, found in Conus geographus (Geography cone).